The primary structure comprises 267 residues: Apolipoprotein A-I (267 aa).

Residues 1 to 18 (MKATVLTLAVLFLTGSQA) form the signal peptide. A run of 2 repeats spans residues 68-89 (LKLL…EQLG) and 90-111 (PVTQ…QEMS). A 10 X approximate tandem repeats region spans residues 68–267 (LKLLDNWDSV…EEYTKKLSTQ (200 aa)). Met-110 is subject to Methionine sulfoxide. Residues 112–122 (KDLEEVKAKVQ) form a 3; half-length repeat. 5 repeat units span residues 123 to 144 (PYLD…QKVE), 145 to 166 (PLRA…EKLS), 167 to 188 (PLGE…THLA), 189 to 210 (PYSD…ENGG), and 211 to 232 (ARLA…EKAK). The residue at position 136 (Met-136) is a Methionine sulfoxide. The stretch at 233–243 (PALEDLRQGLL) is one 9; half-length repeat. Repeat unit 10 spans residues 244–267 (PVLESFKVSFLSALEEYTKKLSTQ).

The protein belongs to the apolipoprotein A1/A4/E family. As to quaternary structure, homodimer. Interacts with APOA1BP and CLU. Component of a sperm activating protein complex (SPAP), consisting of APOA1, an immunoglobulin heavy chain, an immunoglobulin light chain and albumin. Interacts with NDRG1. Interacts with SCGB3A2. Interacts with NAXE and YJEFN3. Post-translationally, glycosylated. In terms of processing, palmitoylated. Phosphorylation sites are present in the extracellular medium. Major protein of plasma HDL, also found in chylomicrons.

It is found in the secreted. Participates in the reverse transport of cholesterol from tissues to the liver for excretion by promoting cholesterol efflux from tissues and by acting as a cofactor for the lecithin cholesterol acyltransferase (LCAT). As part of the SPAP complex, activates spermatozoa motility. The protein is Apolipoprotein A-I (APOA1) of Papio hamadryas (Hamadryas baboon).